A 207-amino-acid chain; its full sequence is Frataxin, mitochondrial (207 aa).

Residues 1 to 40 (MWAFGGRAAVGLLPRTASRASAWVGNPRWREPIVTCGRRG) constitute a mitochondrion transit peptide.

The protein belongs to the frataxin family. Component of the mitochondrial core iron-sulfur cluster (ISC) complex composed of NFS1, LYRM4, NDUFAB1, ISCU, FXN, and FDX2; this complex is a heterohexamer containing two copies of each monomer. Homodimer. Monomer (probable predominant form). Oligomer. Monomers and polymeric aggregates of &gt;1 MDa have been isolated from mitochondria. A small fraction of heterologous overexpressed recombinant frataxin forms high-molecular weight aggregates that incorporate iron. Interacts with LYRM4. Interacts (via ferrous form) with ISCU; the interaction is possible when both are bound to the dimeric form of the cysteine desulfurase complex (NFS1:LYRM4) and the interaction enhances FXN interaction to the dimeric form of the cysteine desulfurase complex (NFS1:LYRM4). Interacts with FECH; one iron-bound FXN monomer seems to interact with a FECH homodimer. Interacts with SDHA and SDHB. Interacts with ACO2; the interaction is dependent on citrate. Interacts with HSPA9. Component of a complex composed of FXN, NFS1, LYRM4 and ISCU. In terms of assembly, interacts with ACO1. Interacts with ISCU (cytoplasmic form). In terms of processing, processed in two steps by mitochondrial processing peptidase (MPP). MPP first cleaves the precursor to intermediate form and subsequently converts the intermediate to yield frataxin mature form (frataxin(81-210)) which is the predominant form. The additional forms, frataxin(56-210) and frataxin(78-210), seem to be produced when the normal maturation process is impaired; their physiological relevance is unsure. As to expression, heart, liver, skeletal muscle, kidney, spleen and thymus. Weakly expressed in the brain and lung.

It localises to the mitochondrion. Its subcellular location is the cytoplasm. The protein resides in the cytosol. The enzyme catalyses 4 Fe(2+) + O2 + 4 H(+) = 4 Fe(3+) + 2 H2O. Functions as an activator of persulfide transfer to the scaffoding protein ISCU as component of the core iron-sulfur cluster (ISC) assembly complex and participates to the [2Fe-2S] cluster assembly. Accelerates sulfur transfer from NFS1 persulfide intermediate to ISCU and to small thiols such as L-cysteine and glutathione leading to persulfuration of these thiols and ultimately sulfide release. Binds ferrous ion and is released from FXN upon the addition of both L-cysteine and reduced FDX2 during [2Fe-2S] cluster assembly. The core iron-sulfur cluster (ISC) assembly complex is involved in the de novo synthesis of a [2Fe-2S] cluster, the first step of the mitochondrial iron-sulfur protein biogenesis. This process is initiated by the cysteine desulfurase complex (NFS1:LYRM4:NDUFAB1) that produces persulfide which is delivered on the scaffold protein ISCU in a FXN-dependent manner. Then this complex is stabilized by FDX2 which provides reducing equivalents to accomplish the [2Fe-2S] cluster assembly. Finally, the [2Fe-2S] cluster is transferred from ISCU to chaperone proteins, including HSCB, HSPA9 and GLRX5. May play a role in the protection against iron-catalyzed oxidative stress through its ability to catalyze the oxidation of Fe(2+) to Fe(3+); the oligomeric form but not the monomeric form has in vitro ferroxidase activity. May be able to store large amounts of iron in the form of a ferrihydrite mineral by oligomerization; however, the physiological relevance is unsure as reports are conflicting and the function has only been shown using heterologous overexpression systems. May function as an iron chaperone protein that protects the aconitase [4Fe-4S]2+ cluster from disassembly and promotes enzyme reactivation. May play a role as a high affinity iron binding partner for FECH that is capable of both delivering iron to ferrochelatase and mediating the terminal step in mitochondrial heme biosynthesis. Functionally, modulates the RNA-binding activity of ACO1. May be involved in the cytoplasmic iron-sulfur protein biogenesis. May contribute to oxidative stress resistance and overall cell survival. The sequence is that of Frataxin, mitochondrial from Mus musculus (Mouse).